The following is a 244-amino-acid chain: Lymphotoxin-beta (244 aa).

Residues methionine 1–serine 18 are Cytoplasmic-facing. A helical; Signal-anchor for type II membrane protein transmembrane segment spans residues leucine 19–proline 48. The Extracellular segment spans residues glutamine 49–glycine 244. A THD domain is found at proline 88–valine 243. N-linked (GlcNAc...) asparagine glycosylation is present at asparagine 222.

Belongs to the tumor necrosis factor family. In terms of assembly, heterotrimer of either two LTB and one LTA subunits or (less prevalent) two LTA and one LTB subunits.

It is found in the membrane. Functionally, cytokine that binds to LTBR/TNFRSF3. May play a specific role in immune response regulation. Provides the membrane anchor for the attachment of the heterotrimeric complex to the cell surface. The polypeptide is Lymphotoxin-beta (LTB) (Macaca mulatta (Rhesus macaque)).